The primary structure comprises 113 residues: MADVEDGEEPCVLSSHSGSAGSKSGGDKMFSLKKWNAVAMWSWDVECDTCAICRVQVMDACLRCQAENKQEDCVVVWGECNHSFHNCCMSLWVKQNNRCPLCQQDWVVQRIGK.

The segment at 1-26 (MADVEDGEEPCVLSSHSGSAGSKSGG) is disordered. Ala2 is modified (N-acetylalanine). Zn(2+) contacts are provided by Cys50, Cys53, Cys61, Cys64, Cys73, Cys80, His82, His85, Cys87, Cys88, Cys99, and Cys102. The RING-type zinc-finger motif lies at 61–103 (CLRCQAENKQEDCVVVWGECNHSFHNCCMSLWVKQNNRCPLCQ).

The protein belongs to the RING-box family. As to quaternary structure, catalytic component of multiple cullin-5-RING E3 ubiquitin-protein ligase complexes (ECS complexes, also named CRL5 complexes) composed of CUL5, Elongin BC (ELOB and ELOC), RNF7/RBX2 and a variable SOCS box domain-containing protein as substrate-specific recognition component. Also interacts (with lower preference) with CUL1, CUL2, CUL3, CUL4A and CUL4B; additional evidence is however required to confirm this result in vivo. Interacts with UBE2F. Interacts with CSNK2B, the interaction is not affected by phosphorylation by CK2. May also interact with DCUN1D1, DCUN1D2, DCUN1D3, DCUN1D4 and DCUN1D5.

It localises to the cytoplasm. The protein localises to the nucleus. The enzyme catalyses S-ubiquitinyl-[E2 ubiquitin-conjugating enzyme]-L-cysteine + [acceptor protein]-L-lysine = [E2 ubiquitin-conjugating enzyme]-L-cysteine + N(6)-ubiquitinyl-[acceptor protein]-L-lysine.. The catalysed reaction is S-[NEDD8-protein]-yl-[E2 NEDD8-conjugating enzyme]-L-cysteine + [cullin]-L-lysine = [E2 NEDD8-conjugating enzyme]-L-cysteine + N(6)-[NEDD8-protein]-yl-[cullin]-L-lysine.. Its pathway is protein modification; protein ubiquitination. It functions in the pathway protein modification; protein neddylation. Catalytic component of multiple cullin-5-RING E3 ubiquitin-protein ligase complexes (ECS complexes), which mediate the ubiquitination and subsequent proteasomal degradation of target proteins. It is thereby involved in various biological processes, such as cell cycle progression, signal transduction and transcription. The functional specificity of the E3 ubiquitin-protein ligase ECS complexes depend on the variable SOCS box-containing substrate recognition component. Within ECS complexes, RNF7/RBX2 recruits the E2 ubiquitination enzyme to the complex via its RING-type and brings it into close proximity to the substrate. Catalytic subunit of various SOCS-containing ECS complexes, such as the ECS(SOCS7) complex, that regulate reelin signaling by mediating ubiquitination and degradation of DAB1. The ECS(SOCS2) complex mediates the ubiquitination and subsequent proteasomal degradation of phosphorylated EPOR and GHR. Promotes ubiquitination and degradation of NF1, thereby regulating Ras protein signal transduction. As part of the ECS(ASB9) complex, catalyzes ubiquitination and degradation of CKB. The ECS(SPSB3) complex catalyzes ubiquitination of nuclear CGAS. As part of the ECS(RAB40C) complex, mediates ANKRD28 ubiquitination and degradation, thereby inhibiting protein phosphatase 6 (PP6) complex activity and focal adhesion assembly during cell migration. As part of some ECS complex, catalyzes 'Lys-11'-linked ubiquitination and degradation of BTRC. ECS complexes and ARIH2 collaborate in tandem to mediate ubiquitination of target proteins; ARIH2 mediating addition of the first ubiquitin on CRLs targets. Specifically catalyzes the neddylation of CUL5 via its interaction with UBE2F. Does not catalyze neddylation of other cullins (CUL1, CUL2, CUL3, CUL4A or CUL4B). May play a role in protecting cells from apoptosis induced by redox agents. This chain is RING-box protein 2, found in Mus musculus (Mouse).